A 445-amino-acid chain; its full sequence is Xylose isomerase (445 aa).

Active-site residues include H99 and D102. Residues E230, E266, H269, D294, D305, D307, and D337 each contribute to the Mg(2+) site.

This sequence belongs to the xylose isomerase family. Homotetramer. Mg(2+) is required as a cofactor.

Its subcellular location is the cytoplasm. The catalysed reaction is alpha-D-xylose = alpha-D-xylulofuranose. This Geobacillus kaustophilus (strain HTA426) protein is Xylose isomerase.